A 249-amino-acid polypeptide reads, in one-letter code: Ribonuclease PH (249 aa).

Residues Arg86 and 124-126 (GTR) contribute to the phosphate site.

It belongs to the RNase PH family. As to quaternary structure, homohexameric ring arranged as a trimer of dimers.

The enzyme catalyses tRNA(n+1) + phosphate = tRNA(n) + a ribonucleoside 5'-diphosphate. Phosphorolytic 3'-5' exoribonuclease that plays an important role in tRNA 3'-end maturation. Removes nucleotide residues following the 3'-CCA terminus of tRNAs; can also add nucleotides to the ends of RNA molecules by using nucleoside diphosphates as substrates, but this may not be physiologically important. Probably plays a role in initiation of 16S rRNA degradation (leading to ribosome degradation) during starvation. In Clostridium botulinum (strain Alaska E43 / Type E3), this protein is Ribonuclease PH.